Reading from the N-terminus, the 336-residue chain is UDP-3-O-acylglucosamine N-acyltransferase (336 aa).

The Proton acceptor role is filled by H233.

The protein belongs to the transferase hexapeptide repeat family. LpxD subfamily. Homotrimer.

It carries out the reaction a UDP-3-O-[(3R)-3-hydroxyacyl]-alpha-D-glucosamine + a (3R)-hydroxyacyl-[ACP] = a UDP-2-N,3-O-bis[(3R)-3-hydroxyacyl]-alpha-D-glucosamine + holo-[ACP] + H(+). Its pathway is bacterial outer membrane biogenesis; LPS lipid A biosynthesis. In terms of biological role, catalyzes the N-acylation of UDP-3-O-acylglucosamine using 3-hydroxyacyl-ACP as the acyl donor. Is involved in the biosynthesis of lipid A, a phosphorylated glycolipid that anchors the lipopolysaccharide to the outer membrane of the cell. The polypeptide is UDP-3-O-acylglucosamine N-acyltransferase (Helicobacter pylori (strain J99 / ATCC 700824) (Campylobacter pylori J99)).